The primary structure comprises 192 residues: Xanthine phosphoribosyltransferase (192 aa).

Xanthine contacts are provided by L20 and T26. 127 to 131 (ANGQA) contributes to the 5-phospho-alpha-D-ribose 1-diphosphate binding site. A xanthine-binding site is contributed by K155.

Belongs to the purine/pyrimidine phosphoribosyltransferase family. Xpt subfamily. Homodimer.

The protein resides in the cytoplasm. It carries out the reaction XMP + diphosphate = xanthine + 5-phospho-alpha-D-ribose 1-diphosphate. It participates in purine metabolism; XMP biosynthesis via salvage pathway; XMP from xanthine: step 1/1. Functionally, converts the preformed base xanthine, a product of nucleic acid breakdown, to xanthosine 5'-monophosphate (XMP), so it can be reused for RNA or DNA synthesis. This chain is Xanthine phosphoribosyltransferase, found in Streptococcus thermophilus.